Consider the following 75-residue polypeptide: Translation initiation factor IF-1, chloroplastic (75 aa).

In terms of domain architecture, S1-like spans M1 to S72.

Belongs to the IF-1 family. As to quaternary structure, component of the 30S ribosomal translation pre-initiation complex which assembles on the 30S ribosome in the order IF-2 and IF-3, IF-1 and N-formylmethionyl-tRNA(fMet); mRNA recruitment can occur at any time during PIC assembly.

The protein localises to the plastid. It is found in the chloroplast. Functionally, one of the essential components for the initiation of protein synthesis. Stabilizes the binding of IF-2 and IF-3 on the 30S subunit to which N-formylmethionyl-tRNA(fMet) subsequently binds. Helps modulate mRNA selection, yielding the 30S pre-initiation complex (PIC). Upon addition of the 50S ribosomal subunit IF-1, IF-2 and IF-3 are released leaving the mature 70S translation initiation complex. The sequence is that of Translation initiation factor IF-1, chloroplastic from Pinus koraiensis (Korean pine).